Reading from the N-terminus, the 118-residue chain is Putative cytochrome P450 family member 4F30 (118 aa).

The segment at 1 to 64 (MVTPAGCLGG…GPLHILGTDG (64 aa)) is disordered. Positions 28-43 (RAGQTGQAVSGAQVSS) are enriched in polar residues.

This chain is Putative cytochrome P450 family member 4F30 (CYP4F30P), found in Homo sapiens (Human).